A 328-amino-acid polypeptide reads, in one-letter code: Phenylalanine--tRNA ligase alpha subunit (328 aa).

Residue Glu-253 coordinates Mg(2+).

Belongs to the class-II aminoacyl-tRNA synthetase family. Phe-tRNA synthetase alpha subunit type 1 subfamily. In terms of assembly, tetramer of two alpha and two beta subunits. Mg(2+) serves as cofactor.

The protein resides in the cytoplasm. The catalysed reaction is tRNA(Phe) + L-phenylalanine + ATP = L-phenylalanyl-tRNA(Phe) + AMP + diphosphate + H(+). The sequence is that of Phenylalanine--tRNA ligase alpha subunit from Actinobacillus pleuropneumoniae serotype 5b (strain L20).